Here is a 359-residue protein sequence, read N- to C-terminus: ELAV-like protein 2 (359 aa).

Residues 1–33 (METQLSNGPTCNNTANGPTTINNNCSSPVDSGN) are disordered. RRM domains are found at residues 39-117 (TNLI…YARP) and 125-205 (ANLY…FANN). Ser-221 is modified (phosphoserine). The RRM 3 domain occupies 276–354 (WCIFVYNLAP…RVLQVSFKTN (79 aa)).

The protein belongs to the RRM elav family. As to quaternary structure, interacts with IGF2BP1. Interacts with MAP1B light chain LC1.

Its function is as follows. RNA-binding protein that binds to the 3' untranslated region (3'UTR) of target mRNAs. Seems to recognize a GAAA motif. Can bind to its own 3'UTR, the FOS 3'UTR and the ID 3'UTR. The chain is ELAV-like protein 2 (ELAVL2) from Pongo abelii (Sumatran orangutan).